The primary structure comprises 500 residues: Probable glycine dehydrogenase (decarboxylating) subunit 2 (500 aa).

Residues 1–25 (MLIFEHSRPGRRNYSQSPKAAEATD) are disordered. K263 is subject to N6-(pyridoxal phosphate)lysine.

It belongs to the GcvP family. C-terminal subunit subfamily. In terms of assembly, the glycine cleavage system is composed of four proteins: P, T, L and H. In this organism, the P 'protein' is a heterodimer of two subunits. Pyridoxal 5'-phosphate is required as a cofactor.

The catalysed reaction is N(6)-[(R)-lipoyl]-L-lysyl-[glycine-cleavage complex H protein] + glycine + H(+) = N(6)-[(R)-S(8)-aminomethyldihydrolipoyl]-L-lysyl-[glycine-cleavage complex H protein] + CO2. Functionally, the glycine cleavage system catalyzes the degradation of glycine. The P protein binds the alpha-amino group of glycine through its pyridoxal phosphate cofactor; CO(2) is released and the remaining methylamine moiety is then transferred to the lipoamide cofactor of the H protein. This is Probable glycine dehydrogenase (decarboxylating) subunit 2 from Nitrosospira multiformis (strain ATCC 25196 / NCIMB 11849 / C 71).